Consider the following 107-residue polypeptide: Urease subunit beta (107 aa).

It belongs to the urease beta subunit family. Heterotrimer of UreA (gamma), UreB (beta) and UreC (alpha) subunits. Three heterotrimers associate to form the active enzyme.

Its subcellular location is the cytoplasm. It carries out the reaction urea + 2 H2O + H(+) = hydrogencarbonate + 2 NH4(+). It functions in the pathway nitrogen metabolism; urea degradation; CO(2) and NH(3) from urea (urease route): step 1/1. This chain is Urease subunit beta, found in Bacillus sp. (strain TB-90).